A 477-amino-acid polypeptide reads, in one-letter code: P3 protein (477 aa).

Positions Met1–Gly21 are disordered. 8 helical membrane-spanning segments follow: residues Pro225–Ala245, Ala253–Phe273, Val281–Leu301, Val320–Ile340, Val361–Val381, Leu383–Leu403, Val417–Leu437, and Phe450–Tyr470.

Belongs to the bile acid:sodium symporter (BASS) (TC 2.A.28) family.

It localises to the membrane. Its function is as follows. The ubiquitous expression and the conservation of the sequence in distant animal species suggest that the gene codes for a protein with housekeeping functions. The polypeptide is P3 protein (SLC10A3) (Bos taurus (Bovine)).